A 448-amino-acid chain; its full sequence is Deoxyguanosinetriphosphate triphosphohydrolase-like protein (448 aa).

Residues 67 to 260 (RLTHSLEVSQ…MELADDIAYG (194 aa)) enclose the HD domain.

This sequence belongs to the dGTPase family. Type 2 subfamily.

The chain is Deoxyguanosinetriphosphate triphosphohydrolase-like protein from Aliivibrio fischeri (strain MJ11) (Vibrio fischeri).